Consider the following 167-residue polypeptide: Lipoprotein signal peptidase (167 aa).

4 helical membrane-spanning segments follow: residues 8–28, 46–66, 68–88, and 101–121; these read TFLTLLLLASIDWVSKLVVLL, WGHFSFLIIPSFNEGAAFGLF, QYKIPLLIFRVCVILGLALFL, and IALTLILAGALGNVGDILLHG. Active-site residues include Asp125 and Asp143. A helical transmembrane segment spans residues 139–159; the sequence is FNLADAFISIGTLLLIGHLYF.

The protein belongs to the peptidase A8 family.

Its subcellular location is the cell inner membrane. It carries out the reaction Release of signal peptides from bacterial membrane prolipoproteins. Hydrolyzes -Xaa-Yaa-Zaa-|-(S,diacylglyceryl)Cys-, in which Xaa is hydrophobic (preferably Leu), and Yaa (Ala or Ser) and Zaa (Gly or Ala) have small, neutral side chains.. The protein operates within protein modification; lipoprotein biosynthesis (signal peptide cleavage). This protein specifically catalyzes the removal of signal peptides from prolipoproteins. The protein is Lipoprotein signal peptidase of Chlamydia trachomatis serovar L2b (strain UCH-1/proctitis).